Reading from the N-terminus, the 192-residue chain is Ion-translocating oxidoreductase complex subunit B (192 aa).

Residues 1 to 26 form a hydrophobic region; the sequence is MNTIWIAVAAISLLGLAFGAILGYAS. In terms of domain architecture, 4Fe-4S spans 32–91; sequence EDDPVVEKIDEILPQSQCGQCGYPGCRPYAEAISCNGEKINRCAPGGEAVMLKISELLNV. Cysteine 49, cysteine 52, cysteine 57, cysteine 74, cysteine 117, cysteine 120, cysteine 123, cysteine 127, cysteine 147, cysteine 150, cysteine 153, and cysteine 157 together coordinate [4Fe-4S] cluster. 4Fe-4S ferredoxin-type domains follow at residues 108–137 and 138–167; these read VVAV…GATR and AMHT…LQPV.

Belongs to the 4Fe4S bacterial-type ferredoxin family. RnfB subfamily. In terms of assembly, the complex is composed of six subunits: RsxA, RsxB, RsxC, RsxD, RsxE and RsxG. The cofactor is [4Fe-4S] cluster.

The protein resides in the cell inner membrane. In terms of biological role, part of a membrane-bound complex that couples electron transfer with translocation of ions across the membrane. Required to maintain the reduced state of SoxR. The polypeptide is Ion-translocating oxidoreductase complex subunit B (Escherichia fergusonii (strain ATCC 35469 / DSM 13698 / CCUG 18766 / IAM 14443 / JCM 21226 / LMG 7866 / NBRC 102419 / NCTC 12128 / CDC 0568-73)).